A 267-amino-acid chain; its full sequence is 2-keto-3-deoxy-L-rhamnonate aldolase (267 aa).

H49 acts as the Proton acceptor in catalysis. Q151 contributes to the substrate binding site. Position 153 (E153) interacts with Mg(2+). Substrate-binding residues include A178 and D179. Residue D179 coordinates Mg(2+).

Belongs to the HpcH/HpaI aldolase family. KDR aldolase subfamily. Homohexamer. The cofactor is Mg(2+).

It catalyses the reaction 2-dehydro-3-deoxy-L-rhamnonate = (S)-lactaldehyde + pyruvate. Catalyzes the reversible retro-aldol cleavage of 2-keto-3-deoxy-L-rhamnonate (KDR) to pyruvate and lactaldehyde. The polypeptide is 2-keto-3-deoxy-L-rhamnonate aldolase (Escherichia coli (strain UTI89 / UPEC)).